The chain runs to 325 residues: Methionyl-tRNA formyltransferase (325 aa).

(6S)-5,6,7,8-tetrahydrofolate is bound at residue 113-116; that stretch reads SLLP.

The protein belongs to the Fmt family.

It carries out the reaction L-methionyl-tRNA(fMet) + (6R)-10-formyltetrahydrofolate = N-formyl-L-methionyl-tRNA(fMet) + (6S)-5,6,7,8-tetrahydrofolate + H(+). Attaches a formyl group to the free amino group of methionyl-tRNA(fMet). The formyl group appears to play a dual role in the initiator identity of N-formylmethionyl-tRNA by promoting its recognition by IF2 and preventing the misappropriation of this tRNA by the elongation apparatus. This is Methionyl-tRNA formyltransferase from Chromohalobacter salexigens (strain ATCC BAA-138 / DSM 3043 / CIP 106854 / NCIMB 13768 / 1H11).